We begin with the raw amino-acid sequence, 219 residues long: Probable nicotinate-nucleotide adenylyltransferase (219 aa).

Belongs to the NadD family.

The enzyme catalyses nicotinate beta-D-ribonucleotide + ATP + H(+) = deamido-NAD(+) + diphosphate. It functions in the pathway cofactor biosynthesis; NAD(+) biosynthesis; deamido-NAD(+) from nicotinate D-ribonucleotide: step 1/1. In terms of biological role, catalyzes the reversible adenylation of nicotinate mononucleotide (NaMN) to nicotinic acid adenine dinucleotide (NaAD). The sequence is that of Probable nicotinate-nucleotide adenylyltransferase from Enterococcus faecalis (strain ATCC 700802 / V583).